The chain runs to 395 residues: Flap endonuclease 1 (395 aa).

An N-domain region spans residues 1 to 104 (MGIKHLYQII…GELAKRFMRK (104 aa)). Asp34 contributes to the Mg(2+) binding site. Residues Arg47 and Arg70 each contribute to the DNA site. Mg(2+)-binding residues include Asp86, Glu158, Glu160, Asp179, and Asp181. The interval 122 to 253 (EVEKFSRRTV…NTALKLIRDH (132 aa)) is I-domain. Glu158 contributes to the DNA binding site. Positions 231 and 233 each coordinate DNA. Asp233 contributes to the Mg(2+) binding site. An interaction with PCNA region spans residues 341–349 (QQSRLEGFF). The span at 360-389 (AVLKRKHEEKLELQKKKKKEDAKAKKEAKS) shows a compositional bias: basic and acidic residues. The tract at residues 360–395 (AVLKRKHEEKLELQKKKKKEDAKAKKEAKSKPRGTT) is disordered.

It belongs to the XPG/RAD2 endonuclease family. FEN1 subfamily. Interacts with PCNA. Three molecules of FEN1 bind to one PCNA trimer with each molecule binding to one PCNA monomer. PCNA stimulates the nuclease activity without altering cleavage specificity. It depends on Mg(2+) as a cofactor. In terms of processing, phosphorylated. Phosphorylation upon DNA damage induces relocalization to the nuclear plasma.

It is found in the nucleus. It localises to the nucleolus. Its subcellular location is the nucleoplasm. The protein resides in the mitochondrion. Its function is as follows. Structure-specific nuclease with 5'-flap endonuclease and 5'-3' exonuclease activities involved in DNA replication and repair. During DNA replication, cleaves the 5'-overhanging flap structure that is generated by displacement synthesis when DNA polymerase encounters the 5'-end of a downstream Okazaki fragment. It enters the flap from the 5'-end and then tracks to cleave the flap base, leaving a nick for ligation. Also involved in the long patch base excision repair (LP-BER) pathway, by cleaving within the apurinic/apyrimidinic (AP) site-terminated flap. Acts as a genome stabilization factor that prevents flaps from equilibrating into structures that lead to duplications and deletions. Also possesses 5'-3' exonuclease activity on nicked or gapped double-stranded DNA, and exhibits RNase H activity. Also involved in replication and repair of rDNA and in repairing mitochondrial DNA. The chain is Flap endonuclease 1 from Ajellomyces capsulatus (strain NAm1 / WU24) (Darling's disease fungus).